A 656-amino-acid polypeptide reads, in one-letter code: PAN2-PAN3 deadenylation complex subunit pan3 (656 aa).

Disordered stretches follow at residues Met-1–Asp-24 and Ser-75–Asn-117. The C3H1-type zinc-finger motif lies at Asp-24–Asn-53. The PABPC-interacting motif-2 (PAM-2) signature appears at Asn-63–Gln-83. 2 stretches are compositionally biased toward polar residues: residues Ser-75 to Ala-96 and Gly-107 to Asn-117. The pseudokinase domain stretch occupies residues Gln-251–Thr-514. Residues Thr-275 to Cys-280, Arg-302, Asp-352 to Thr-359, and Ser-412 to Lys-413 contribute to the ATP site. Positions Thr-515–Val-553 form a coiled coil. Positions Val-554–Ile-656 are knob domain.

The protein belongs to the protein kinase superfamily. PAN3 family. Homodimer. Forms a heterotrimer with a catalytic subunit par-1/pan2 to form the poly(A)-nuclease (PAN) deadenylation complex. Interacts (via PAM-2 motif) with poly(A)-binding protein pabp-1 (via PABC domain), conferring substrate specificity of the enzyme complex.

Its subcellular location is the cytoplasm. Regulatory subunit of the poly(A)-nuclease (PAN) deadenylation complex, one of two cytoplasmic mRNA deadenylases involved in mRNA turnover. PAN specifically shortens poly(A) tails of RNA and the activity is stimulated by poly(A)-binding protein pabp-1. PAN deadenylation is followed by rapid degradation of the shortened mRNA tails by the CCR4-NOT complex. Deadenylated mRNAs are then degraded by two alternative mechanisms, namely exosome-mediated 3'-5' exonucleolytic degradation, or deadenylation-dependent mRNA decaping and subsequent 5'-3' exonucleolytic degradation by rgb-30/xrn1. May also be involved in post-transcriptional maturation of mRNA poly(A) tails. par-2/pan3 acts as a positive regulator for PAN activity, recruiting the catalytic subunit par-1/pan2 to mRNA via its interaction with RNA and with pabp-1. This is PAN2-PAN3 deadenylation complex subunit pan3 (par-2) from Neurospora crassa (strain ATCC 24698 / 74-OR23-1A / CBS 708.71 / DSM 1257 / FGSC 987).